Reading from the N-terminus, the 210-residue chain is Regulatory protein RecX (210 aa).

The interval S28–K47 is disordered.

The protein belongs to the RecX family.

Its subcellular location is the cytoplasm. Its function is as follows. Modulates RecA activity. The polypeptide is Regulatory protein RecX (Corynebacterium efficiens (strain DSM 44549 / YS-314 / AJ 12310 / JCM 11189 / NBRC 100395)).